A 183-amino-acid chain; its full sequence is Dual-action ribosomal maturation protein DarP (183 aa).

Belongs to the DarP family.

The protein resides in the cytoplasm. Member of a network of 50S ribosomal subunit biogenesis factors which assembles along the 30S-50S interface, preventing incorrect 23S rRNA structures from forming. Promotes peptidyl transferase center (PTC) maturation. The sequence is that of Dual-action ribosomal maturation protein DarP from Salmonella paratyphi A (strain ATCC 9150 / SARB42).